The primary structure comprises 127 residues: Mitochondrial pyruvate carrier 2 (127 aa).

Topologically, residues 2–40 (AAAGARGLRATYHRLMDKVELLLPKKLRPLYNHPAGPRT) are mitochondrial matrix. Position 26 is an N6-acetyllysine (Lys26). The helical transmembrane segment at 41–61 (VFFWAPIMKWGLVCAGLADMA) threads the bilayer. The Mitochondrial intermembrane portion of the chain corresponds to 62 to 72 (RPAEKLSTAQS). A helical transmembrane segment spans residues 73–90 (TVLMATGFIWSRYSLVII). Residues 91–92 (PK) lie on the Mitochondrial matrix side of the membrane. The chain crosses the membrane as a helical span at residues 93-115 (NWSLFAVNFFVGSAGASQLFRIW). Topologically, residues 116–127 (RYNQELKSKGIQ) are mitochondrial intermembrane.

The protein belongs to the mitochondrial pyruvate carrier (MPC) (TC 2.A.105) family. As to quaternary structure, homodimer. Homooligomer. Forms heterodimers with MPC1 and MPC1L. The heterodimer is the more stable and dominant form.

It is found in the mitochondrion inner membrane. It carries out the reaction pyruvate(out) + H(+)(out) = pyruvate(in) + H(+)(in). Mediates the uptake of pyruvate into mitochondria. The polypeptide is Mitochondrial pyruvate carrier 2 (Mpc2) (Mus musculus (Mouse)).